A 1575-amino-acid polypeptide reads, in one-letter code: Mediator of RNA polymerase II transcription subunit 1 (1575 aa).

Residues 1–670 (MKAQGETEDS…YGSSPLERQN (670 aa)) are interaction with the Mediator complex and THRA. Residues 16 to 590 (MSSLLERLHA…SIKDRHESVG (575 aa)) are interaction with ESR1. 2 interaction with the Mediator complex regions span residues 108 to 212 (FYVE…GYLT) and 215 to 390 (SGGH…SLQG). The tract at residues 405–644 (PLILNMIRHQ…MAGNTKNHPM (240 aa)) is interaction with THRA. Positions 542-789 (PASSPGYGMT…TDILSDIAEE (248 aa)) are interaction with VDR. A Phosphoserine modification is found at serine 588. An LXXLL motif 1 motif is present at residues 604–608 (LTSLL). Disordered regions lie at residues 609-706 (QITG…QTED), 737-760 (HITP…SHPQ), 791-818 (SKLP…HSQS), 874-895 (SQSG…NDDF), and 951-1564 (SGSQ…GEED). Residues 622–632 (PTPPHHTPPPV) are compositionally biased toward pro residues. The tract at residues 622–701 (PTPPHHTPPP…SSRVPPDKPK (80 aa)) is interaction with GATA1. The interaction with PPARGC1A and THRA stretch occupies residues 622–701 (PTPPHHTPPP…SSRVPPDKPK (80 aa)). An LXXLL motif 2 motif is present at residues 645 to 649 (LMNLL). A compositionally biased stretch (polar residues) spans 655-675 (QDFSTLYGSSPLERQNSSSGS). Residues 656–1066 (DFSTLYGSSP…TPPIPKITIQ (411 aa)) form an interaction with ESR1 region. Serine 664 carries the phosphoserine modification. Basic and acidic residues predominate over residues 696–706 (PPDKPKHQTED). A Phosphoserine modification is found at serine 795. Threonine 805 carries the post-translational modification Phosphothreonine. Over residues 808 to 818 (RDSSSSGHSQS) the composition is skewed to polar residues. The Integrase domain-binding motif (IBM) motif lies at 875–902 (QSGFGEEYFDESSQSGDNDDFKGFASQA). 3 positions are modified to phosphoserine: serine 887, serine 953, and serine 955. The span at 963-974 (LGKEKTQKRVKE) shows a compositional bias: basic and acidic residues. Positions 976 to 986 (NGTGASSGSGP) are enriched in gly residues. The residue at position 1032 (threonine 1032) is a Phosphothreonine; by MAPK1 or MAPK3. The span at 1034–1051 (PTSTGGSKSPGSSGRSQT) shows a compositional bias: low complexity. Phosphothreonine is present on residues threonine 1051 and threonine 1057. 2 stretches are compositionally biased toward low complexity: residues 1078 to 1094 (SSHS…SSGS) and 1101 to 1152 (SSSS…SQTG). Serine 1158 carries the phosphoserine modification. Residues 1158 to 1184 (SPITKHGLSSGSSSTKMKPQGKPSSLM) show a composition bias toward polar residues. Lysine 1179 is modified (N6-acetyllysine). The span at 1185-1197 (NPSISKPNISPSH) shows a compositional bias: low complexity. At serine 1209 the chain carries Phosphoserine. Threonine 1217 is modified (phosphothreonine). Composition is skewed to low complexity over residues 1220–1258 (SSKA…GSVS) and 1265–1295 (SNSC…SKGK). The residue at position 1225 (serine 1225) is a Phosphoserine. The interaction with TP53 stretch occupies residues 1251 to 1423 (SASSGSVSQK…KPGESGGDGL (173 aa)). 2 positions are modified to phosphoserine: serine 1304 and serine 1349. Residues 1331–1352 (MGASTNSSNHPMSSKHNTSGGE) show a composition bias toward polar residues. Residues 1354-1366 (QSKREKSDKDKSK) show a composition bias toward basic and acidic residues. 2 positions are modified to phosphoserine: serine 1405 and serine 1435. Composition is skewed to polar residues over residues 1427–1442 (IASS…SGST) and 1450–1484 (PSHS…SPSS). At threonine 1442 the chain carries Phosphothreonine. A Phosphothreonine; by MAPK1 or MAPK3 modification is found at threonine 1459. Serine 1465, serine 1467, serine 1481, serine 1483, and serine 1484 each carry phosphoserine. Positions 1498–1507 (KHKKHKKEKK) are enriched in basic residues. An N6-acetyllysine modification is found at lysine 1523. The span at 1527–1545 (WSKSPISSDPTASVTNNPI) shows a compositional bias: polar residues.

Belongs to the Mediator complex subunit 1 family. As to quaternary structure, component of the Mediator complex, which is composed of MED1, MED4, MED6, MED7, MED8, MED9, MED10, MED11, MED12, MED13, MED13L, MED14, MED15, MED16, MED17, MED18, MED19, MED20, MED21, MED22, MED23, MED24, MED25, MED26, MED27, MED29, MED30, MED31, CCNC, CDK8 and CDC2L6/CDK11. The MED12, MED13, CCNC and CDK8 subunits form a distinct module termed the CDK8 module. Mediator containing the CDK8 module is less active than Mediator lacking this module in supporting transcriptional activation. Individual preparations of the Mediator complex lacking one or more distinct subunits have been variously termed ARC, CRSP, DRIP, PC2, SMCC and TRAP. This subunit specifically interacts with a number of nuclear receptors in a ligand-dependent fashion including AR, ESR1, ESR2, PPARA, PPARG, RORA, RXRA, RXRG, THRA, THRB and VDR. Interacts with CTNNB1, GABPA, GLI3, PPARGC1A and TP53. Interacts with GATA1 and YWHAH. Interacts with CLOCK; this interaction requires the presence of THRAP3. Interacts with CCAR1. Interacts with NR4A3. Interacts (via IBM motif) with PSIP1 (via IBD domain); phosphorylation increases its affinity for PSIP1. Interacts with USP22. Post-translationally, phosphorylated by MAPK1 or MAPK3 during G2/M phase which may enhance protein stability and promote entry into the nucleolus. Phosphorylation increases its interaction with PSIP1. As to expression, widely expressed in the adult, with high levels of expression in the liver, lung, intestinal mucosa, kidney cortex, thymic cortex, splenic follicle and seminiferous epithelium in testis. Also expressed in the adult heart, brain, spleen and skeletal muscle.

The protein resides in the nucleus. In terms of biological role, component of the Mediator complex, a coactivator involved in the regulated transcription of nearly all RNA polymerase II-dependent genes. Mediator functions as a bridge to convey information from gene-specific regulatory proteins to the basal RNA polymerase II transcription machinery. Mediator is recruited to promoters by direct interactions with regulatory proteins and serves as a scaffold for the assembly of a functional preinitiation complex with RNA polymerase II and the general transcription factors. Essential for embryogenesis, including development of the central nervous system, heart, liver and placenta and for erythropoiesis. Also required for normal transcriptional control of thyroid-stimulating hormone beta (TSHB) in the pituitary. Acts as a coactivator for GATA1-mediated transcriptional activation during erythroid differentiation of K562 erythroleukemia cells. The chain is Mediator of RNA polymerase II transcription subunit 1 (Med1) from Mus musculus (Mouse).